We begin with the raw amino-acid sequence, 291 residues long: Beta-lactamase CTX-M-25 (291 aa).

A signal peptide spans 1 to 30; the sequence is MMRKSVRRAMLMTTACVSLLLASVPLCAQA. Catalysis depends on S73, which acts as the Nucleophile; acyl-ester intermediate. A beta-lactam is bound by residues K76, S133, E169, and S240.

This sequence belongs to the class-A beta-lactamase family. Monomer.

The protein resides in the secreted. The enzyme catalyses a beta-lactam + H2O = a substituted beta-amino acid. With respect to regulation, inhibited by the beta-lactamase-blocking agents clavulanic acid and tazobactam; in the DH10B strain. Its function is as follows. Extended-spectrum beta-lactamase (ESBL) which confers resistance to penicillins, as well as first, second and third-generation cephalosporins. Has cefotaxime-hydrolyzing activity. Inactive against cephalosporin antibiotic, cefoxitin, and the carbapenem, imipenem. In Escherichia coli, this protein is Beta-lactamase CTX-M-25.